Here is a 325-residue protein sequence, read N- to C-terminus: Mitochondrial amidoxime-reducing component 1 (325 aa).

Topologically, residues 1–16 (MDLKEAFATIFDQNRK) are mitochondrial matrix. A helical; Signal-anchor for type II membrane protein transmembrane segment spans residues 17–36 (VALYAAGTTVAVLGLGLVFK). Over 37–325 (YMRREEKLTR…VGEPVYKITY (289 aa)) the chain is Cytoplasmic. Residues Lys-59, Ser-60, and Arg-84 each contribute to the Mo-molybdopterin site. Residues 85-175 (HWLVITEDGH…ADKPVRLVHY (91 aa)) are MOSC N-terminal region. The 145-residue stretch at 179–323 (LKPQRPHEKE…LHVGEPVYKI (145 aa)) folds into the MOSC domain. 4 residues coordinate Mo-molybdopterin: Arg-230, Arg-264, Cys-265, and Tyr-305.

Requires Mo-molybdopterin as cofactor.

It localises to the mitochondrion outer membrane. The protein localises to the membrane. It catalyses the reaction N(omega)-hydroxy-L-arginine + 2 Fe(II)-[cytochrome b5] + 2 H(+) = L-arginine + 2 Fe(III)-[cytochrome b5] + H2O. Catalyzes the reduction of N-oxygenated molecules, acting as a counterpart of cytochrome P450 and flavin-containing monooxygenases in metabolic cycles. As a component of prodrug-converting system, reduces a multitude of N-hydroxylated prodrugs particularly amidoximes, leading to increased drug bioavailability. May be involved in mitochondrial N(omega)-hydroxy-L-arginine (NOHA) reduction, regulating endogenous nitric oxide levels and biosynthesis. Postulated to cleave the N-OH bond of N-hydroxylated substrates in concert with electron transfer from NADH to cytochrome b5 reductase then to cytochrome b5, the ultimate electron donor that primes the active site for substrate reduction. The protein is Mitochondrial amidoxime-reducing component 1 (mtarc1) of Danio rerio (Zebrafish).